The primary structure comprises 237 residues: 5'-methylthioadenosine/S-adenosylhomocysteine nucleosidase (237 aa).

Glutamate 12 functions as the Proton acceptor in the catalytic mechanism. Residues alanine 78, isoleucine 152, and 173–174 contribute to the substrate site; that span reads ME. Aspartate 197 acts as the Proton donor in catalysis.

This sequence belongs to the PNP/UDP phosphorylase family. MtnN subfamily. As to quaternary structure, homodimer.

The catalysed reaction is S-adenosyl-L-homocysteine + H2O = S-(5-deoxy-D-ribos-5-yl)-L-homocysteine + adenine. It catalyses the reaction S-methyl-5'-thioadenosine + H2O = 5-(methylsulfanyl)-D-ribose + adenine. The enzyme catalyses 5'-deoxyadenosine + H2O = 5-deoxy-D-ribose + adenine. Its pathway is amino-acid biosynthesis; L-methionine biosynthesis via salvage pathway; S-methyl-5-thio-alpha-D-ribose 1-phosphate from S-methyl-5'-thioadenosine (hydrolase route): step 1/2. Catalyzes the irreversible cleavage of the glycosidic bond in both 5'-methylthioadenosine (MTA) and S-adenosylhomocysteine (SAH/AdoHcy) to adenine and the corresponding thioribose, 5'-methylthioribose and S-ribosylhomocysteine, respectively. Also cleaves 5'-deoxyadenosine, a toxic by-product of radical S-adenosylmethionine (SAM) enzymes, into 5-deoxyribose and adenine. Thus, is required for in vivo function of the radical SAM enzymes biotin synthase and lipoic acid synthase, that are inhibited by 5'-deoxyadenosine accumulation. This Hamiltonella defensa subsp. Acyrthosiphon pisum (strain 5AT) protein is 5'-methylthioadenosine/S-adenosylhomocysteine nucleosidase.